A 256-amino-acid chain; its full sequence is Dihydroorotate dehydrogenase B (NAD(+)), electron transfer subunit (256 aa).

An FAD-binding FR-type domain is found at 2–100 (IRLETMKVVA…MGPQGNGFDL (99 aa)). FAD is bound by residues 51–54 (RPIS), 68–70 (IYR), and 75–76 (GT). [2Fe-2S] cluster is bound by residues Cys-220, Cys-225, Cys-228, and Cys-243.

It belongs to the PyrK family. Heterotetramer of 2 PyrK and 2 PyrD type B subunits. It depends on [2Fe-2S] cluster as a cofactor. Requires FAD as cofactor.

It participates in pyrimidine metabolism; UMP biosynthesis via de novo pathway; orotate from (S)-dihydroorotate (NAD(+) route): step 1/1. Its function is as follows. Responsible for channeling the electrons from the oxidation of dihydroorotate from the FMN redox center in the PyrD type B subunit to the ultimate electron acceptor NAD(+). The sequence is that of Dihydroorotate dehydrogenase B (NAD(+)), electron transfer subunit from Streptococcus pneumoniae (strain ATCC BAA-255 / R6).